Here is a 470-residue protein sequence, read N- to C-terminus: 1-aminocyclopropane-1-carboxylate synthase 9 (470 aa).

Substrate is bound by residues Glu-47 and Tyr-85. The residue at position 272 (Lys-272) is an N6-(pyridoxal phosphate)lysine.

Belongs to the class-I pyridoxal-phosphate-dependent aminotransferase family. In terms of assembly, homodimer and heterodimer. In vivo, the relevance of heterodimerization with other ACS enzymes is however unsure. Interacts (via its C-terminal region) with FEI1, FEI2, ETO1 and EOL1. Pyridoxal 5'-phosphate is required as a cofactor. In terms of processing, may be processed at its C-terminus. As to expression, expressed in roots and siliques.

The enzyme catalyses S-adenosyl-L-methionine = 1-aminocyclopropane-1-carboxylate + S-methyl-5'-thioadenosine + H(+). Its pathway is alkene biosynthesis; ethylene biosynthesis via S-adenosyl-L-methionine; ethylene from S-adenosyl-L-methionine: step 1/2. Its function is as follows. 1-aminocyclopropane-1-carboxylate synthase (ACS) enzymes catalyze the conversion of S-adenosyl-L-methionine (SAM) into 1-aminocyclopropane-1-carboxylate (ACC), a direct precursor of ethylene. In Arabidopsis thaliana (Mouse-ear cress), this protein is 1-aminocyclopropane-1-carboxylate synthase 9 (ACS9).